The chain runs to 85 residues: N.vectensis toxin 1 4 (85 aa).

The first 20 residues, 1–20 (MASFKIVIVCLALLVAVASA), serve as a signal peptide directing secretion. A propeptide spanning residues 21 to 36 (RRRDMMSDDELDYHYS) is cleaved from the precursor. 3 disulfide bridges follow: cysteine 42-cysteine 82, cysteine 44-cysteine 72, and cysteine 65-cysteine 83.

This sequence belongs to the sea anemone sodium channel inhibitory toxin family. Type II subfamily. As to expression, expressed in ectodermal glands and in clumps outside of the extodermal layer. Is not expressed in nematocytes. In adult female tissues, shows similar expression levels in mesenteries (gametes-producing tissue), tentacles, pharynx and physa.

The protein resides in the secreted. Functionally, binds to site 3 of voltage-gated sodium channels and inhibits the inactivation process. Is highly active on DmNav1/TipE (drosophila) and is only extremely weakly active on rat Nav1.4-beta-1/SCN4A-SCN1B, and on human Nav1.5-beta-1/SCN5A-beta-1. This reveals high specificity for arthropod over mammalian channels. In vivo, when released into the medium, this recombinant toxin induces impaired swimming, paralysis and death of the crustacean A.nauplii within several hours. Also causes paralysis of cherry shrimps immediately after injection at very low doses. Its effect on zebrafish (D.rerio) larvae is also rapid, since it induces tail twitching accompanied by impaired swimming after 20 minutes and complete paralysis within 45 minutes. It has also been observed to cause death of zebrafish larvae within 1 hour. The protein is N.vectensis toxin 1 4 of Nematostella vectensis (Starlet sea anemone).